A 305-amino-acid chain; its full sequence is UDP-3-O-acyl-N-acetylglucosamine deacetylase (305 aa).

Zn(2+) contacts are provided by H79, H238, and D242. H265 (proton donor) is an active-site residue.

This sequence belongs to the LpxC family. Requires Zn(2+) as cofactor.

It catalyses the reaction a UDP-3-O-[(3R)-3-hydroxyacyl]-N-acetyl-alpha-D-glucosamine + H2O = a UDP-3-O-[(3R)-3-hydroxyacyl]-alpha-D-glucosamine + acetate. It functions in the pathway glycolipid biosynthesis; lipid IV(A) biosynthesis; lipid IV(A) from (3R)-3-hydroxytetradecanoyl-[acyl-carrier-protein] and UDP-N-acetyl-alpha-D-glucosamine: step 2/6. Catalyzes the hydrolysis of UDP-3-O-myristoyl-N-acetylglucosamine to form UDP-3-O-myristoylglucosamine and acetate, the committed step in lipid A biosynthesis. The protein is UDP-3-O-acyl-N-acetylglucosamine deacetylase of Vibrio vulnificus (strain CMCP6).